The primary structure comprises 317 residues: NAC domain-containing protein 19 (317 aa).

Residues 14–162 (LPPGFRFYPT…DWVLCRIYKK (149 aa)) enclose the NAC domain.

Dimer. Interacts with RHA2A, RHA2B or RHG1A, but not with RHA3A or RHA3B. In terms of tissue distribution, expressed in stems, flowers, cauline leaves and rosettes.

It localises to the nucleus. Transcription factors that bind specifically to the 5'-CATGTG-3' motif. This chain is NAC domain-containing protein 19 (NAC019), found in Arabidopsis thaliana (Mouse-ear cress).